Here is a 303-residue protein sequence, read N- to C-terminus: MSTTLSSSTYGKDNVKFLKVKKDPQNPKKQEVMEATVTCLLEGGFDTSYTEADNSSIVPTDTVKNTILVLAKTTEIWPIERFAAKLATHFVEKYSHVSGVSVKIVQDRWVKYAVDGKPHDHSFIHEGGEKRITDLYYKRSGDYKLSSAIKDLTVLKSTGSMFYGYNKCDFTTLQPTTDRILSTDVDATWVWDNKKIGSVYDIAKAADKGIFDNVYNQAREITLTTFALENSPSVQATMFNMATQILEKACSVYSVSYALPNKHYFLIDLKWKGLENDNELFYPSPHPNGLIKCTVVRKEKTKL.

Residues Lys-12 and Thr-60 each act as charge relay system in the active site. The urate site is built by Thr-60, Asp-61, Phe-162, Arg-179, Val-234, Gln-235, and Asn-261. Residue His-263 is the Charge relay system of the active site. The Microbody targeting signal signature appears at 301 to 303 (TKL).

The protein belongs to the uricase family.

It localises to the peroxisome. The enzyme catalyses urate + O2 + H2O = 5-hydroxyisourate + H2O2. It functions in the pathway purine metabolism; urate degradation; (S)-allantoin from urate: step 1/3. In terms of biological role, catalyzes the oxidation of uric acid to 5-hydroxyisourate, which is further processed to form (S)-allantoin. In Cyberlindnera jadinii (Torula yeast), this protein is Uricase.